The sequence spans 166 residues: Regulatory protein RecX (166 aa).

It belongs to the RecX family.

The protein resides in the cytoplasm. Its function is as follows. Modulates RecA activity. The sequence is that of Regulatory protein RecX from Escherichia coli O7:K1 (strain IAI39 / ExPEC).